The chain runs to 178 residues: Ribosome maturation factor RimP (178 aa).

It belongs to the RimP family.

It localises to the cytoplasm. In terms of biological role, required for maturation of 30S ribosomal subunits. In Mycolicibacterium gilvum (strain PYR-GCK) (Mycobacterium gilvum (strain PYR-GCK)), this protein is Ribosome maturation factor RimP.